The chain runs to 122 residues: Large ribosomal subunit protein uL14 (122 aa).

This sequence belongs to the universal ribosomal protein uL14 family. As to quaternary structure, part of the 50S ribosomal subunit. Forms a cluster with proteins L3 and L19. In the 70S ribosome, L14 and L19 interact and together make contacts with the 16S rRNA in bridges B5 and B8.

In terms of biological role, binds to 23S rRNA. Forms part of two intersubunit bridges in the 70S ribosome. This chain is Large ribosomal subunit protein uL14, found in Colwellia psychrerythraea (strain 34H / ATCC BAA-681) (Vibrio psychroerythus).